Here is a 343-residue protein sequence, read N- to C-terminus: Aspartate carbamoyltransferase catalytic subunit (343 aa).

The carbamoyl phosphate site is built by Arg91 and Thr92. Lys119 lines the L-aspartate pocket. 3 residues coordinate carbamoyl phosphate: Arg141, His171, and Gln174. L-aspartate contacts are provided by Arg204 and Arg259. Positions 300 and 301 each coordinate carbamoyl phosphate.

Belongs to the aspartate/ornithine carbamoyltransferase superfamily. ATCase family. As to quaternary structure, heterododecamer (2C3:3R2) of six catalytic PyrB chains organized as two trimers (C3), and six regulatory PyrI chains organized as three dimers (R2).

The enzyme catalyses carbamoyl phosphate + L-aspartate = N-carbamoyl-L-aspartate + phosphate + H(+). It participates in pyrimidine metabolism; UMP biosynthesis via de novo pathway; (S)-dihydroorotate from bicarbonate: step 2/3. Its function is as follows. Catalyzes the condensation of carbamoyl phosphate and aspartate to form carbamoyl aspartate and inorganic phosphate, the committed step in the de novo pyrimidine nucleotide biosynthesis pathway. In Burkholderia vietnamiensis (strain G4 / LMG 22486) (Burkholderia cepacia (strain R1808)), this protein is Aspartate carbamoyltransferase catalytic subunit.